Here is a 403-residue protein sequence, read N- to C-terminus: Serine/threonine transporter SstT (403 aa).

9 consecutive transmembrane segments (helical) span residues 14 to 34 (VTQI…APAI), 44 to 64 (VFVS…VMAS), 79 to 99 (ILWL…VASM), 138 to 158 (ALLN…GVAL), 175 to 195 (GVTL…FGLV), 214 to 234 (LAVL…LIVF), 295 to 315 (MAGA…TLGI), 327 to 347 (VVAA…LLLI), and 353 to 373 (LFGI…IIGV).

The protein belongs to the dicarboxylate/amino acid:cation symporter (DAACS) (TC 2.A.23) family.

The protein localises to the cell inner membrane. It catalyses the reaction L-serine(in) + Na(+)(in) = L-serine(out) + Na(+)(out). The catalysed reaction is L-threonine(in) + Na(+)(in) = L-threonine(out) + Na(+)(out). In terms of biological role, involved in the import of serine and threonine into the cell, with the concomitant import of sodium (symport system). The polypeptide is Serine/threonine transporter SstT (Pseudomonas putida (strain ATCC 700007 / DSM 6899 / JCM 31910 / BCRC 17059 / LMG 24140 / F1)).